A 184-amino-acid polypeptide reads, in one-letter code: Ribosome-recycling factor (184 aa).

It belongs to the RRF family.

The protein resides in the cytoplasm. Functionally, responsible for the release of ribosomes from messenger RNA at the termination of protein biosynthesis. May increase the efficiency of translation by recycling ribosomes from one round of translation to another. The polypeptide is Ribosome-recycling factor (Borrelia turicatae (strain 91E135)).